We begin with the raw amino-acid sequence, 314 residues long: Ribosomal RNA small subunit methyltransferase H (314 aa).

Residues 35-37 (GGH), Asp55, Phe79, Asp101, and Gln108 each bind S-adenosyl-L-methionine.

This sequence belongs to the methyltransferase superfamily. RsmH family.

The protein resides in the cytoplasm. The enzyme catalyses cytidine(1402) in 16S rRNA + S-adenosyl-L-methionine = N(4)-methylcytidine(1402) in 16S rRNA + S-adenosyl-L-homocysteine + H(+). In terms of biological role, specifically methylates the N4 position of cytidine in position 1402 (C1402) of 16S rRNA. This is Ribosomal RNA small subunit methyltransferase H from Pectobacterium carotovorum subsp. carotovorum (strain PC1).